A 383-amino-acid polypeptide reads, in one-letter code: Acetylornithine deacetylase (383 aa).

A Zn(2+)-binding site is contributed by H80. D82 is an active-site residue. D112 is a Zn(2+) binding site. The active site involves E144. Residues E145, E169, and H355 each contribute to the Zn(2+) site.

The protein belongs to the peptidase M20A family. ArgE subfamily. Homodimer. Requires Zn(2+) as cofactor. Co(2+) serves as cofactor. Glutathione is required as a cofactor.

The protein localises to the cytoplasm. It catalyses the reaction N(2)-acetyl-L-ornithine + H2O = L-ornithine + acetate. It functions in the pathway amino-acid biosynthesis; L-arginine biosynthesis; L-ornithine from N(2)-acetyl-L-ornithine (linear): step 1/1. Its function is as follows. Catalyzes the hydrolysis of the amide bond of N(2)-acetylated L-amino acids. Cleaves the acetyl group from N-acetyl-L-ornithine to form L-ornithine, an intermediate in L-arginine biosynthesis pathway, and a branchpoint in the synthesis of polyamines. This is Acetylornithine deacetylase from Shigella dysenteriae serotype 1 (strain Sd197).